Consider the following 222-residue polypeptide: Cytochrome b6 (222 aa).

The helical transmembrane segment at 39–59 (IFYCLGGITLTCFLIQFATGF) threads the bilayer. Cys42 lines the heme c pocket. Residues His93 and His107 each contribute to the heme b site. 3 consecutive transmembrane segments (helical) span residues 97 to 117 (ASMM…TGGF), 123 to 143 (LTWV…VTGY), and 193 to 213 (LHTF…FLMI). The heme b site is built by His194 and His209.

The protein belongs to the cytochrome b family. PetB subfamily. As to quaternary structure, the 4 large subunits of the cytochrome b6-f complex are cytochrome b6, subunit IV (17 kDa polypeptide, PetD), cytochrome f and the Rieske protein, while the 4 small subunits are PetG, PetL, PetM and PetN. The complex functions as a dimer. It depends on heme b as a cofactor. The cofactor is heme c.

The protein resides in the cellular thylakoid membrane. Component of the cytochrome b6-f complex, which mediates electron transfer between photosystem II (PSII) and photosystem I (PSI), cyclic electron flow around PSI, and state transitions. The polypeptide is Cytochrome b6 (Cyanothece sp. (strain PCC 7425 / ATCC 29141)).